The sequence spans 313 residues: Porphobilinogen deaminase (313 aa).

At Cys241 the chain carries S-(dipyrrolylmethanemethyl)cysteine.

The protein belongs to the HMBS family. As to quaternary structure, monomer. It depends on dipyrromethane as a cofactor.

The catalysed reaction is 4 porphobilinogen + H2O = hydroxymethylbilane + 4 NH4(+). The protein operates within porphyrin-containing compound metabolism; protoporphyrin-IX biosynthesis; coproporphyrinogen-III from 5-aminolevulinate: step 2/4. Its pathway is porphyrin-containing compound metabolism; chlorophyll biosynthesis. Its function is as follows. Tetrapolymerization of the monopyrrole PBG into the hydroxymethylbilane pre-uroporphyrinogen in several discrete steps. This Chlorobium luteolum (strain DSM 273 / BCRC 81028 / 2530) (Pelodictyon luteolum) protein is Porphobilinogen deaminase.